A 604-amino-acid chain; its full sequence is Serine protease 56 (604 aa).

The first 22 residues, 1-22 (MPLAMLLLLLLLLSPDSQTAHG), serve as a signal peptide directing secretion. The disordered stretch occupies residues 70–94 (CQGPGRPRPQAPLLQDPPEPVQCGE). The segment covering 75–89 (RPRPQAPLLQDPPEP) has biased composition (pro residues). N-linked (GlcNAc...) asparagine glycosylation is present at N101. Residues 109–341 (IVGGSTAPSG…FKDWLQEQMS (233 aa)) enclose the Peptidase S1 domain. C134 and C150 are oxidised to a cystine. Residues H149 and D195 each act as charge relay system in the active site. 3 disulfides stabilise this stretch: C229/C296, C260/C275, and C286/C317. Residue S290 is the Charge relay system of the active site. Disordered regions lie at residues 424-452 (RPGLRRGVSAPARSAPSLQELPGHNPREQ) and 578-604 (PQAPWIGADQGQRLGKERQGQLQPPVP).

The protein belongs to the peptidase S1 family. As to expression, expressed in the eye: present in the retina and in the optic nerve.

It is found in the endoplasmic reticulum membrane. In terms of biological role, serine protease required during eye development. This is Serine protease 56 (Prss56) from Mus musculus (Mouse).